A 597-amino-acid polypeptide reads, in one-letter code: Protein Spindly (597 aa).

At M1 the chain carries N-acetylmethionine. Residues 1 to 445 (MEADITNLRN…LKLKYEPEER (445 aa)) are a coiled coil. Phosphoserine occurs at positions 508 and 547. A disordered region spans residues 531–597 (PASTEVLHEQ…STPEMQCPQQ (67 aa)). Polar residues predominate over residues 540-549 (QSGNTPSSPR). Basic and acidic residues predominate over residues 550–574 (LTEESRLPTKVKERKEATSKLEKGA). The segment covering 583-597 (YVSSKSTPEMQCPQQ) has biased composition (polar residues).

This sequence belongs to the Spindly family. In terms of assembly, interacts with KNTC1 and ZW10. These interactions appear weak and may be transient or indirect. Interacts with dynein intermediate chain and dynactin (DCTN1). Interacts with the catalytically active form of USP45. Post-translationally, monoubiquitinated with'Lys-48' linkage. Deubiquitinated by USP45.

It is found in the cytoplasm. It localises to the cytoskeleton. Its subcellular location is the microtubule organizing center. The protein resides in the centrosome. The protein localises to the chromosome. It is found in the centromere. It localises to the kinetochore. Its subcellular location is the nucleus. The protein resides in the spindle pole. Its function is as follows. Required for the localization of dynein and dynactin to the mitotic kintochore. Dynein is believed to control the initial lateral interaction between the kinetochore and spindle microtubules and to facilitate the subsequent formation of end-on kinetochore-microtubule attachments mediated by the NDC80 complex. Also required for correct spindle orientation. Does not appear to be required for the removal of spindle assembly checkpoint (SAC) proteins from the kinetochore upon bipolar spindle attachment. Acts as an adapter protein linking the dynein motor complex to various cargos and converts dynein from a non-processive to a highly processive motor in the presence of dynactin. Facilitates the interaction between dynein and dynactin and activates dynein processivity (the ability to move along a microtubule for a long distance without falling off the track). Plays a role in cell migration. The chain is Protein Spindly (Spdl1) from Rattus norvegicus (Rat).